Here is an 87-residue protein sequence, read N- to C-terminus: Beta-toxin Cn5 (87 aa).

A signal peptide spans 1-19 (MNSLLMITACLFLIGTVWA). The region spanning 20 to 85 (KEGYLVNKST…TYPLPNKSCS (66 aa)) is the LCN-type CS-alpha/beta domain. 4 disulfides stabilise this stretch: Cys-31-Cys-84, Cys-35-Cys-60, Cys-44-Cys-65, and Cys-48-Cys-67.

It belongs to the long (4 C-C) scorpion toxin superfamily. Sodium channel inhibitor family. Beta subfamily. Expressed by the venom gland.

The protein resides in the secreted. In terms of biological role, beta toxins bind voltage-independently at site-4 of sodium channels (Nav) and shift the voltage of activation toward more negative potentials thereby affecting sodium channel activation and promoting spontaneous and repetitive firing. This toxin is lethal to crustaceans (freshwater crayfish (Cambarellus montezumae spp.)), it provokes a reversible paralysis to insects (crickets (Achaeta spp.)), but is not toxic to mice. At high concentrations, it does displace the (beta) mammal-specific toxin Cn2 from rat brain synaptosomes. This is Beta-toxin Cn5 from Centruroides noxius (Mexican scorpion).